The following is an 838-amino-acid chain: Xyloglucanase (838 aa).

The N-terminal stretch at 1-19 is a signal peptide; that stretch reads MKVSRVLALVLGAVIPAHA. Asp-53 serves as the catalytic Nucleophile. N-linked (GlcNAc...) asparagine glycans are attached at residues Asn-232 and Asn-436. The active-site Proton donor is Asp-469. Residues 750-801 form a disordered region; that stretch reads GTGGTSSSTKQSSSSTSSASSSTTLRSSVVSTTRASTVTSSRTSSAAGPTGS. Over residues 754-797 the composition is skewed to low complexity; the sequence is TSSSTKQSSSSTSSASSSTTLRSSVVSTTRASTVTSSRTSSAAG. The region spanning 802 to 838 is the CBM1 domain; that stretch reads GVAGHYAQCGGIGWTGPTQCVAPYVCQKQNDYYYQCV.

It belongs to the glycosyl hydrolase 74 family.

The enzyme catalyses Hydrolysis of (1-&gt;4)-D-glucosidic linkages in xyloglucans so as to successively remove oligosaccharides from the newly-formed chain end after endo-initiation on a polymer molecule.. Hydrolyzes the glucosidic bonds of unbranched Glc residues in tamarind seed xyloglucan, producing XXXG, XLXG, XXLG and XLLG. Has a low activity against beta-glucan and carboxymethylcellulose. Not active against Avicel, laminarin, xylan, galactomannan, linear and branched arabinans, galactan, polygalacturonic acid, starch, beta-D-Glcp, beta-D-cellobiose, beta-D-Galp, beta-D-Xylp, alpha-D-Xylp, alpha-L-Araf and alpha-L-Arap. The protein is Xyloglucanase of Hypocrea jecorina (strain QM6a) (Trichoderma reesei).